The sequence spans 343 residues: Chlorophyll(ide) b reductase NOL, chloroplastic (343 aa).

Residues 1–54 (MAATAAYLPLRAQAQVGLAPLRPSGSAAAGARLPGRTARRRLAARGGPEAAGIR) constitute a chloroplast transit peptide. 78 to 102 (ITGSTKGIGYALAKEFLKAGDNVVI) contributes to the NAD(+) binding site. Residue Tyr-228 is the Proton acceptor of the active site.

Belongs to the short-chain dehydrogenases/reductases (SDR) family. Interacts with NCY1 to form a complex that acts as a chlorophyll b reductase. As to expression, expressed in leaves and stems. Also detected in non-photosynthetic tissues such as roots.

The protein localises to the plastid. It localises to the chloroplast thylakoid membrane. The enzyme catalyses 7(1)-hydroxychlorophyllide a + NAD(+) = chlorophyllide b + NADH + H(+). It carries out the reaction 7(1)-hydroxychlorophyllide a + NADP(+) = chlorophyllide b + NADPH + H(+). Required for chlorophyll b degradation. This chain is Chlorophyll(ide) b reductase NOL, chloroplastic (NOL), found in Oryza sativa subsp. japonica (Rice).